The primary structure comprises 700 residues: Polycomb protein suz12 (700 aa).

Disordered regions lie at residues 215–250 (DFNG…EGDK) and 319–376 (TNDT…RDVS). A compositionally biased stretch (polar residues) spans 218–228 (GLTNGETNENI). The C2H2-type zinc finger occupies 405 to 428 (LHCPWCTLNCRKLYSLLKHLKLCH). Residues 520-596 (RLYFHSDTCL…NQMNHGCMLF (77 aa)) are VEFS-box. The interval 651-700 (LAPPSDEAFEEPNRTTSSSSSFMETNGKDRVVENDCVSGQPPKHSKKQKP) is disordered. Residues 664–674 (RTTSSSSSFME) are compositionally biased toward polar residues.

It belongs to the VEFS (VRN2-EMF2-FIS2-SU(Z)12) family. In terms of assembly, component of the prc2/eed-ezh2 complex.

The protein resides in the nucleus. Its function is as follows. Polycomb group (PcG) protein. Component of the prc2/eed-ezh2 complex, which methylates 'Lys-9' (H3K9me) and 'Lys-27' (H3K27me) of histone H3, leading to transcriptional repression of the affected target gene. This is Polycomb protein suz12 (suz12) from Xenopus tropicalis (Western clawed frog).